The sequence spans 322 residues: 4-hydroxythreonine-4-phosphate dehydrogenase (322 aa).

Thr132 lines the substrate pocket. The a divalent metal cation site is built by His160, His205, and His260. Residues Lys268, Asn277, and Arg286 each contribute to the substrate site.

This sequence belongs to the PdxA family. Homodimer. Zn(2+) serves as cofactor. It depends on Mg(2+) as a cofactor. The cofactor is Co(2+).

The protein resides in the cytoplasm. The catalysed reaction is 4-(phosphooxy)-L-threonine + NAD(+) = 3-amino-2-oxopropyl phosphate + CO2 + NADH. Its pathway is cofactor biosynthesis; pyridoxine 5'-phosphate biosynthesis; pyridoxine 5'-phosphate from D-erythrose 4-phosphate: step 4/5. In terms of biological role, catalyzes the NAD(P)-dependent oxidation of 4-(phosphooxy)-L-threonine (HTP) into 2-amino-3-oxo-4-(phosphooxy)butyric acid which spontaneously decarboxylates to form 3-amino-2-oxopropyl phosphate (AHAP). This is 4-hydroxythreonine-4-phosphate dehydrogenase from Xanthomonas oryzae pv. oryzae (strain PXO99A).